The chain runs to 274 residues: Large ribosomal subunit protein uL2cz/uL2cy (274 aa).

Disordered stretches follow at residues 1 to 23 and 224 to 274; these read MAIHLYKTSTPSTRNGAVDSKVK and NPVD…RRSK.

This sequence belongs to the universal ribosomal protein uL2 family. As to quaternary structure, part of the 50S ribosomal subunit.

The protein resides in the plastid. It localises to the chloroplast. This Lactuca sativa (Garden lettuce) protein is Large ribosomal subunit protein uL2cz/uL2cy (rpl2-A).